The chain runs to 300 residues: uncharacterized protein (300 aa).

In terms of domain architecture, HTH lysR-type spans 10 to 67; sequence FDLNLLVIFECIYQHLSISKAAESLYITPSAVSQSLQRLRAQFNDPLFIRSGKGIAPT. A DNA-binding region (H-T-H motif) is located at residues 27–46; the sequence is ISKAAESLYITPSAVSQSLQ.

It belongs to the LysR transcriptional regulatory family.

This is an uncharacterized protein from Escherichia coli (strain K12).